A 198-amino-acid chain; its full sequence is MICOS complex subunit MIC26 (198 aa).

A signal peptide spans 1-25 (MFKVIQRSVGPASLSLLTFKVYAAP). Residues 108–128 (PGFFPRLGVIGFAGLIGLLLA) traverse the membrane as a helical segment. Ser-162 carries an O-linked (Xyl...) (chondroitin sulfate) serine glycan.

It belongs to the apolipoprotein O/MICOS complex subunit Mic27 family. Component of the mitochondrial contact site and cristae organizing system (MICOS) complex, composed of at least MICOS10/MIC10, CHCHD3/MIC19, CHCHD6/MIC25, APOOL/MIC27, IMMT/MIC60, APOO/MIC23/MIC26 and MICOS13/MIC13. This complex was also known under the names MINOS or MitOS complex. he MICOS complex associates with mitochondrial outer membrane proteins SAMM50, MTX1 and MTX2 (together described as components of the mitochondrial outer membrane sorting assembly machinery (SAM) complex) and DNAJC11, mitochondrial inner membrane protein TMEM11 and with HSPA9. The MICOS and SAM complexes together with DNAJC11 are part of a large protein complex spanning both membranes termed the mitochondrial intermembrane space bridging (MIB) complex. Interacts with IMMT/MIC60. Interacts with MICOS10/MIC10 and APOOL/MIC27. In terms of processing, O-glycosylation; glycosaminoglycan of chondroitin-sulfate type. Expressed in all tissues examined. Up-regulated in diabetic heart.

It localises to the mitochondrion inner membrane. The protein resides in the secreted. It is found in the mitochondrion. Its subcellular location is the golgi apparatus membrane. The protein localises to the endoplasmic reticulum membrane. Its function is as follows. Component of the MICOS complex, a large protein complex of the mitochondrial inner membrane that plays crucial roles in the maintenance of crista junctions, inner membrane architecture, and formation of contact sites to the outer membrane. Plays a crucial role in crista junction formation and mitochondrial function. Can promote cardiac lipotoxicity by enhancing mitochondrial respiration and fatty acid metabolism in cardiac myoblasts. Promotes cholesterol efflux from macrophage cells. Detected in HDL, LDL and VLDL. Secreted by a microsomal triglyceride transfer protein (MTTP)-dependent mechanism, probably as a VLDL-associated protein that is subsequently transferred to HDL. The sequence is that of MICOS complex subunit MIC26 (APOO) from Homo sapiens (Human).